We begin with the raw amino-acid sequence, 35 residues long: MFDDQDLGFFANFLGIFIFIMVIAYHFVVAEPKFE.

The Lumenal portion of the chain corresponds to 1–8 (MFDDQDLG). Residues 9–29 (FFANFLGIFIFIMVIAYHFVV) form a helical membrane-spanning segment. Topologically, residues 30-35 (AEPKFE) are cytoplasmic.

Belongs to the OST4 family. Component of the oligosaccharyltransferase (OST) complex.

It localises to the endoplasmic reticulum membrane. Subunit of the oligosaccharyl transferase (OST) complex that catalyzes the initial transfer of a defined glycan (Glc(3)Man(9)GlcNAc(2) in eukaryotes) from the lipid carrier dolichol-pyrophosphate to an asparagine residue within an Asn-X-Ser/Thr consensus motif in nascent polypeptide chains, the first step in protein N-glycosylation. N-glycosylation occurs cotranslationally and the complex associates with the Sec61 complex at the channel-forming translocon complex that mediates protein translocation across the endoplasmic reticulum (ER). All subunits are required for a maximal enzyme activity. The sequence is that of Dolichyl-diphosphooligosaccharide--protein glycosyltransferase subunit 4B (OST4B) from Arabidopsis thaliana (Mouse-ear cress).